A 295-amino-acid polypeptide reads, in one-letter code: Protein FAM110A (295 aa).

Disordered regions lie at residues 117–148 (PVSP…PPSI) and 160–191 (PASP…KSDL). Composition is skewed to pro residues over residues 138–147 (LATPPRPPPS) and 160–171 (PASPIQPCPSPG).

It belongs to the FAM110 family. As to quaternary structure, may interact with CSPP1.

It localises to the cytoplasm. The protein resides in the cytoskeleton. Its subcellular location is the microtubule organizing center. The protein localises to the centrosome. It is found in the spindle pole. The sequence is that of Protein FAM110A (FAM110A) from Bos taurus (Bovine).